The chain runs to 94 residues: Co-chaperonin GroES (94 aa).

This sequence belongs to the GroES chaperonin family. Heptamer of 7 subunits arranged in a ring. Interacts with the chaperonin GroEL.

Its subcellular location is the cytoplasm. In terms of biological role, together with the chaperonin GroEL, plays an essential role in assisting protein folding. The GroEL-GroES system forms a nano-cage that allows encapsulation of the non-native substrate proteins and provides a physical environment optimized to promote and accelerate protein folding. GroES binds to the apical surface of the GroEL ring, thereby capping the opening of the GroEL channel. The chain is Co-chaperonin GroES from Ruminiclostridium cellulolyticum (strain ATCC 35319 / DSM 5812 / JCM 6584 / H10) (Clostridium cellulolyticum).